The sequence spans 80 residues: Putative DNA-directed RNA polymerase subunit omega (80 aa).

The protein belongs to the RNA polymerase subunit omega family.

The protein resides in the plastid. It localises to the chloroplast. The enzyme catalyses RNA(n) + a ribonucleoside 5'-triphosphate = RNA(n+1) + diphosphate. Its function is as follows. May be involved in RNA polymerase activity. In Gracilaria tenuistipitata var. liui (Red alga), this protein is Putative DNA-directed RNA polymerase subunit omega.